Here is a 65-residue protein sequence, read N- to C-terminus: Conotoxin tx3c (65 aa).

Positions 1–19 (MFKLGVLLTICLLLFSLNA) are cleaved as a signal peptide. Positions 20-50 (VPLDGDQPADQPAERLLDDISFENNPFYDPA) are excised as a propeptide. Intrachain disulfides connect C53–C64, C54–C60, and C57–C63. At P62 the chain carries 4-hydroxyproline; partial. The residue at position 64 (C64) is a Cysteine amide.

In terms of processing, the hydroxylation at Pro-62 is observed in PubMed:15924437, PubMed:19380747 and PubMed:22709442, and the non-hydroxylation is described in PubMed:22709442. Expressed by the venom duct.

It is found in the secreted. Its function is as follows. Causes scratching in mice. This Conus textile (Cloth-of-gold cone) protein is Conotoxin tx3c.